A 664-amino-acid polypeptide reads, in one-letter code: Protein fem-1 homolog CG6966 (664 aa).

ANK repeat units lie at residues 40–70 (NGAT…NVEQ), 82–111 (EDAP…NVNS), 115–144 (TNST…DFEV), 148–177 (HGHT…DVNR), 181–210 (KGNT…TMDV), and 213–242 (YGMT…VSRE). TPR repeat units follow at residues 245 to 279 (IHAL…RAVE) and 335 to 368 (SYYI…QQKI). A disordered region spans residues 433–460 (QQKDQQHPQKQLPAADKSPSCSASSSAS). The segment covering 450-460 (SPSCSASSSAS) has biased composition (low complexity). ANK repeat units follow at residues 529–571 (FDRT…DPNA) and 575–605 (AGNT…HLDT).

Belongs to the fem-1 family. In terms of assembly, component of a CRL2 E3 ubiquitin-protein ligase complex, also named ECS (Elongin BC-CUL2/5-SOCS-box protein) complex.

The protein operates within protein modification; protein ubiquitination. Functionally, substrate-recognition component of a Cul2-RING (CRL2) E3 ubiquitin-protein ligase complex of the DesCEND (destruction via C-end degrons) pathway, which recognizes a C-degron located at the extreme C terminus of target proteins, leading to their ubiquitination and degradation. The C-degron recognized by the DesCEND pathway is usually a motif of less than ten residues and can be present in full-length proteins, truncated proteins or proteolytically cleaved forms. This chain is Protein fem-1 homolog CG6966, found in Drosophila melanogaster (Fruit fly).